The chain runs to 177 residues: Large ribosomal subunit protein uL6 (177 aa).

The protein belongs to the universal ribosomal protein uL6 family. As to quaternary structure, part of the 50S ribosomal subunit.

This protein binds to the 23S rRNA, and is important in its secondary structure. It is located near the subunit interface in the base of the L7/L12 stalk, and near the tRNA binding site of the peptidyltransferase center. In Acinetobacter baumannii (strain SDF), this protein is Large ribosomal subunit protein uL6.